The sequence spans 394 residues: S-adenosylmethionine synthase 2 (394 aa).

Glu11 provides a ligand contact to Mg(2+). Position 17 (His17) interacts with ATP. Glu45 provides a ligand contact to K(+). 2 residues coordinate L-methionine: Glu58 and Gln101. Residues 169–171, 237–240, Asp248, 254–255, Ala271, Lys275, and Lys279 contribute to the ATP site; these read DGK, SGRF, and RK. L-methionine is bound at residue Asp248. Lys279 contributes to the L-methionine binding site.

Belongs to the AdoMet synthase family. Homotetramer. Mn(2+) is required as a cofactor. Mg(2+) serves as cofactor. It depends on Co(2+) as a cofactor. The cofactor is K(+).

The protein resides in the cytoplasm. It catalyses the reaction L-methionine + ATP + H2O = S-adenosyl-L-methionine + phosphate + diphosphate. It functions in the pathway amino-acid biosynthesis; S-adenosyl-L-methionine biosynthesis; S-adenosyl-L-methionine from L-methionine: step 1/1. In terms of biological role, catalyzes the formation of S-adenosylmethionine from methionine and ATP. The reaction comprises two steps that are both catalyzed by the same enzyme: formation of S-adenosylmethionine (AdoMet) and triphosphate, and subsequent hydrolysis of the triphosphate. The polypeptide is S-adenosylmethionine synthase 2 (SAM2) (Hordeum vulgare (Barley)).